The chain runs to 342 residues: tRNA N6-adenosine threonylcarbamoyltransferase (342 aa).

Fe cation-binding residues include His115 and His119. Substrate-binding positions include 138–142 (IISGG), Asp171, Gly184, Asp188, and Asn276. A Fe cation-binding site is contributed by Asp304.

The protein belongs to the KAE1 / TsaD family. Requires Fe(2+) as cofactor.

Its subcellular location is the cytoplasm. It catalyses the reaction L-threonylcarbamoyladenylate + adenosine(37) in tRNA = N(6)-L-threonylcarbamoyladenosine(37) in tRNA + AMP + H(+). Required for the formation of a threonylcarbamoyl group on adenosine at position 37 (t(6)A37) in tRNAs that read codons beginning with adenine. Is involved in the transfer of the threonylcarbamoyl moiety of threonylcarbamoyl-AMP (TC-AMP) to the N6 group of A37, together with TsaE and TsaB. TsaD likely plays a direct catalytic role in this reaction. The chain is tRNA N6-adenosine threonylcarbamoyltransferase from Endomicrobium trichonymphae.